We begin with the raw amino-acid sequence, 307 residues long: Serine/threonine-protein phosphatase PP2A-5 catalytic subunit (307 aa).

Residues D55, H57, D83, and N115 each contribute to the Mn(2+) site. H116 acts as the Proton donor in catalysis. Residues H165 and H239 each contribute to the Mn(2+) site. Residue L307 is modified to Leucine methyl ester.

The protein belongs to the PPP phosphatase family. PP-2A subfamily. In terms of assembly, PP2A consists of a common heterodimeric core enzyme, composed of a 36 kDa catalytic subunit (subunit C) and a 65 kDa constant regulatory subunit (subunit A), that associates with a variety of regulatory subunits such as subunits B (the R2/B/PR55/B55, R3/B''/PR72/PR130/PR59 and R5/B'/B56 families). Also interacts with CHIP and TAF12B. Interacts with B'THETA. Interacts with CLC-A, CLC-B, CLC-C and CLC-G. Mn(2+) serves as cofactor. In terms of processing, reversibly methyl esterified on Leu-307 by leucine carboxyl methyltransferase 1 (LCMT1) and pectin methylesterase 1 (PME1). Carboxyl methylation influences the affinity of the catalytic subunit for the different regulatory subunits, thereby modulating the PP2A holoenzyme's substrate specificity, enzyme activity and cellular localization. Post-translationally, phosphorylation of either threonine (by autophosphorylation-activated protein kinase) or tyrosine results in inactivation of the phosphatase. Auto-dephosphorylation has been suggested as a mechanism for reactivation. Ubiquitinated. CHIP-mediated ubiquitination enhances phosphatase activity after an abiotic stress such as low temperature or darkness.

It localises to the cytoplasm. It is found in the cytosol. Its subcellular location is the peroxisome. It carries out the reaction O-phospho-L-seryl-[protein] + H2O = L-seryl-[protein] + phosphate. The catalysed reaction is O-phospho-L-threonyl-[protein] + H2O = L-threonyl-[protein] + phosphate. Its function is as follows. Associates with the serine/threonine-protein phosphatase PP2A regulatory subunits A and B' to positively regulates beta-oxidation of fatty acids and protoauxins in peroxisomes by dephosphorylating peroxisomal beta-oxidation-related proteins. Involved in the positive regulation of salt stress responses. May function by increasing chloride channel activities on vacuolar membranes. In Arabidopsis thaliana (Mouse-ear cress), this protein is Serine/threonine-protein phosphatase PP2A-5 catalytic subunit.